Reading from the N-terminus, the 4700-residue chain is StAR-related lipid transfer protein 9 (4700 aa).

Positions 3–384 constitute a Kinesin motor domain; that stretch reads NVQVAVRVRP…LRYASSAKNI (382 aa). 103 to 110 contacts ATP; it reads GQTGSGKT. Positions 310–328 are enriched in low complexity; the sequence is GDSGILSSPSGTSSGGAPS. The segment at 310-331 is disordered; that stretch reads GDSGILSSPSGTSSGGAPSRRQ. An FHA domain is found at 498-569; sequence LKEGTTKIGR…LTQGAVITLG (72 aa). 2 stretches are compositionally biased toward basic and acidic residues: residues 631-646 and 867-877; these read QCDE…ETSH and TSEKTSSEEHL. Disordered stretches follow at residues 631–652, 851–880, 1057–1104, and 1128–1188; these read QCDE…QIQQ, WDPS…LPQA, KKSS…SDTD, and ERKW…GFTA. Positions 1134 to 1146 are enriched in acidic residues; that stretch reads PEPENSESDDSQL. Ser1203 bears the Phosphoserine mark. Disordered regions lie at residues 1939–1976, 2014–2043, 2088–2179, 2254–2290, 2377–2403, 2416–2444, 2479–2539, 2589–2613, 2642–2678, 2696–2731, 2765–2789, 2821–2852, 2892–2955, 3124–3144, 3199–3241, 3274–3412, 3564–3611, 3766–3790, 3830–3884, 3906–3991, 4033–4086, and 4153–4193; these read MPGE…EGKN, ERNP…RVNN, DQKE…PARD, ESQV…QEEN, GVEH…SSEA, MGSH…SPQD, LNKV…PRLL, RVAG…EGEA, LSAD…RKRR, SSSS…PVEE, PQET…PRTL, VQNS…ASPK, SKHS…PCRQ, NAQV…PHTL, HTCS…GLDG, SLRQ…MPST, IALG…KGSA, SDTS…AEET, LPSV…RVQK, ASTQ…SPKL, PEKV…QHLS, and PGGL…EWSK. Basic and acidic residues predominate over residues 2088 to 2100; that stretch reads DQKEQEKTDHAFR. Polar residues predominate over residues 2103–2118; the sequence is SSGNPLPSKDQPSSPR. Over residues 2119–2129 the composition is skewed to basic and acidic residues; sequence QTDDTVFRDSE. A compositionally biased stretch (polar residues) spans 2137-2148; it reads SIGNHPQVQKIT. Basic and acidic residues predominate over residues 2153-2169; that stretch reads RSREGVRESEPVREHTH. The span at 2254-2266 shows a compositional bias: polar residues; the sequence is ESQVAEHVSSSNQ. 2 stretches are compositionally biased toward basic and acidic residues: residues 2267–2279 and 2379–2391; these read EEPK…EEMP and EHQD…RSHS. Residues 2500–2510 are compositionally biased toward basic and acidic residues; sequence QASKPRQKAEK. A compositionally biased stretch (polar residues) spans 2642–2653; that stretch reads LSADSFESLPNT. Residues 2712-2729 are compositionally biased toward low complexity; sequence PSSADPLAPDSPRSSAPV. Over residues 2916–2925 the composition is skewed to basic and acidic residues; sequence APCRHPREAL. The span at 3124 to 3141 shows a compositional bias: polar residues; it reads NAQVCQTNPEPPATTQGP. 3 stretches are compositionally biased toward polar residues: residues 3274–3285, 3320–3339, and 3368–3387; these read SLRQNETPQPAA, SSPT…QELN, and SGKS…QKAS. Positions 3388-3397 are enriched in basic and acidic residues; it reads SRLDDGTTDH. The span at 3857 to 3872 shows a compositional bias: low complexity; that stretch reads SSPSPSSPHSPGLFPS. Polar residues predominate over residues 3906 to 3924; sequence ASTQEPGLSPGSLTLSAPS. The segment covering 3958–3975 has biased composition (low complexity); that stretch reads LGGSQRGRSSLQRSNGRS. Positions 4048–4065 are enriched in polar residues; the sequence is EPSQWQSRTENGGESSAS. Residues 4334 to 4387 adopt a coiled-coil conformation; the sequence is SDIELMLQDYQQAHEEAKVEIARARDQLRERTEQEKLRIHQKIISQLLKEEDKL. Residues 4397–4411 show a composition bias toward low complexity; the sequence is CTSSNGSLSSGMTSG. Positions 4397–4419 are disordered; sequence CTSSNGSLSSGMTSGYNSSPALS. Residues 4483–4700 enclose the START domain; the sequence is SYQDLAKHVV…IARLASFLGR (218 aa).

It belongs to the TRAFAC class myosin-kinesin ATPase superfamily. Kinesin family. As to quaternary structure, interacts with ATAD3A. Expressed in the central nervous system, muscle cells (heart and skeletal muscle), pancreas, prostate and lung.

It localises to the cytoplasm. The protein resides in the cytoskeleton. It is found in the microtubule organizing center. Its subcellular location is the centrosome. The protein localises to the centriole. It localises to the nucleus. Its function is as follows. Microtubule-dependent motor protein required for spindle pole assembly during mitosis. Required to stabilize the pericentriolar material (PCM). The sequence is that of StAR-related lipid transfer protein 9 (STARD9) from Homo sapiens (Human).